A 385-amino-acid chain; its full sequence is tRNA pseudouridine synthase D (385 aa).

D65 functions as the Nucleophile in the catalytic mechanism. In terms of domain architecture, TRUD spans 143 to 345 (GCENYFGEQR…SDGVRKAFFK (203 aa)).

The protein belongs to the pseudouridine synthase TruD family.

The enzyme catalyses uridine(13) in tRNA = pseudouridine(13) in tRNA. Functionally, responsible for synthesis of pseudouridine from uracil-13 in transfer RNAs. This chain is tRNA pseudouridine synthase D, found in Aquifex aeolicus (strain VF5).